The sequence spans 853 residues: Ion channel CASTOR (853 aa).

A compositionally biased stretch (low complexity) spans 1 to 30; sequence MSLDSEVSVSSSSGRDWFFPSPSFFRSSPS. The interval 1-55 is disordered; sequence MSLDSEVSVSSSSGRDWFFPSPSFFRSSPSQYGRRFHTNSNTHSAPSSTYPSGIR. A compositionally biased stretch (polar residues) spans 38–51; it reads TNSNTHSAPSSTYP. The helical transmembrane segment at 96 to 116 threads the bilayer; the sequence is QFGLQFALVTLTIVFLLLLLL. Residues 117-137 adopt a coiled-coil conformation; the sequence is RNTHLESQVNKLQGEILRLHA. The next 3 membrane-spanning stretches (helical) occupy residues 168–188, 227–247, and 279–299; these read NLAL…FKYI, LVLL…LFGV, and LVAV…LGLV. 2 consecutive RCK N-terminal domains span residues 320-461 and 580-752; these read QNHT…ETVV and PERI…DYVL.

Belongs to the castor/pollux (TC 1.A.1.23) family. As to quaternary structure, homooligomer. Expressed in infected and uninfected roots, leaves, seed pods, and flower buds.

It is found in the nucleus membrane. Its function is as follows. Ion channel with a moderate preference for potassium over sodium and calcium. Involved in perinuclear calcium spiking but not in cytosolic calcium influx. Closed at negative voltages in presence of magnesium. Required for early signal transduction events leading to endosymbiosis. Acts early in a signal transduction chain leading from the perception of Nod factor to the activation of calcium spiking. Also involved in fungal entry into root epidermal cells during the establishment of the arbuscular mycorrhizal symbiosis. The polypeptide is Ion channel CASTOR (CASTOR) (Lotus japonicus (Lotus corniculatus var. japonicus)).